Reading from the N-terminus, the 77-residue chain is Large ribosomal subunit protein bL28 (77 aa).

Residues 1–20 (MSRVCQVTGKGPVTGNNISH) form a disordered region.

Belongs to the bacterial ribosomal protein bL28 family.

In Pseudomonas syringae pv. tomato (strain ATCC BAA-871 / DC3000), this protein is Large ribosomal subunit protein bL28.